A 1412-amino-acid polypeptide reads, in one-letter code: MKALLDLFKQVSQDEQFDAIKIGIASPEKIRSWSYGEVRKPETINYRTFKPERDGLFCSKIFGPIKDYECLCGKYKRLKHRGVICEKCGVEVTVAKVRRERMGHIELASPVAHIWFLKSLPSRLGMVLDMTLRDIERVLYFEAWCVIEPGMTPLKRGQIMSDDDFLAKTEEYGDDFRALMGAEAVRELLRTIDIDREVETLRGELKATSSEAKIKKISKRLKVLEGFQKSGIKAEWMVMEVLPVLPPDLRPLVPLDGGRFATSDLNDLYRRVINRNNRLKRLLELKAPEIILRNEKRMLQEAVDSLLDNGRRGKAMTGANKRQLKSLADMIKGKSGRFRQNLLGKRVDYSGRSVIVVGPQLKLHQCGLPKLMALELFKPFIFNRLEMMGLATTIKAAKKLVESQEPVVWDILEEVIREHPVMLNRAPTLHRLGIQAFEPVLIEGKAIQLHPLVCAAFNADFDGDQMAVHVPLSLEAQLEARTLMLASNNVLFPANGEPSIVPSQDIVLGLYYTTRERINGKGEGIFFTDVAEVQRAYDNGEVELQSRITVRLTEYERDDNGEFQPVLRRHETTVGRALLSEILPKGLPFTVLNKALKKKEISRLINQSFRRCGLRDTVIFADKLMQSGFRLATRGGISIAMGDMLIPKAKEGILAEASREVKEIDKQYSSGLVTSQERYNNVVDIWGKASDKVGKAMMEQLATEPVVNRHGEEVRQESFNSIYMMADSGARGSAAQIRQLAGMRGLMAKPDGSIIETPITANFREGLNVLQYFISTHGARKGLADTALKTANSGYLTRRLVDVTQDLVITEDDCGTTQGYAMKALVEGGEVIEPLRDRILGRVAAIDVVDPDTQETAIAAGTLLDEDLVDLIDRIGVDEVKVRTPLTCETRHGLCAHCYGRDLGRGSHVNVGEAVGVIAAQSIGEPGTQLTMRTFHIGGAASRSALASAVETKSTGKVGFASTMRYVTNAKGERVAISRSGELAIFDDNGRERERHKIPYGATVLVGDGEAVKAGTRLATWDPLTRPIVSEYGGAVRFENIEEGVTVAKQLDEITGLSTLVVITPKTRSGKTVTRPQIKLVNENGEDVKIAGTDHSVNISFPVGALITVRDGQQVAVGEVLARIPQESQKTRDITGGLPRVAELFEARSPKDAGMLADVTGTVSFGKDTKGKQRLVITDLEGVSHEFLIPKEKQVLVHDGQVVNKGEMIVDGPADPHDILRLQGIEKLATYIVDEVQDVYRLQGVKINDKHIEVIVRQMLRRVNIVDAGDTEFIPGEQVERSELLNENDRVTAEGKRPATYDNVLLGITKASLSTDSFISAASFQETTRVLTEAAIMGKRDDLRGLKENVIVGRLIPAGTGLAYHMARKDKEALEAAEREAARQLANPFEDAPVTVDADAPQSDAGQEGSAE.

Zn(2+) is bound by residues C70, C72, C85, and C88. The Mg(2+) site is built by D460, D462, and D464. Residues C814, C888, C895, and C898 each contribute to the Zn(2+) site. The interval 1378–1412 (EREAARQLANPFEDAPVTVDADAPQSDAGQEGSAE) is disordered.

This sequence belongs to the RNA polymerase beta' chain family. In terms of assembly, the RNAP catalytic core consists of 2 alpha, 1 beta, 1 beta' and 1 omega subunit. When a sigma factor is associated with the core the holoenzyme is formed, which can initiate transcription. Mg(2+) serves as cofactor. It depends on Zn(2+) as a cofactor.

It carries out the reaction RNA(n) + a ribonucleoside 5'-triphosphate = RNA(n+1) + diphosphate. DNA-dependent RNA polymerase catalyzes the transcription of DNA into RNA using the four ribonucleoside triphosphates as substrates. The protein is DNA-directed RNA polymerase subunit beta' of Bordetella petrii (strain ATCC BAA-461 / DSM 12804 / CCUG 43448).